The chain runs to 281 residues: Arabinose operon regulatory protein (281 aa).

Residues P8, T24, R38, Y82, and H93 each contribute to the alpha-L-arabinopyanose site. The region spanning 180–279 is the HTH araC/xylS-type domain; the sequence is RDACQYISDH…GASPSEFRAG (100 aa). DNA-binding regions (H-T-H motif) lie at residues 198 to 219 and 246 to 269; these read ASVA…RQQL and IATV…KKCT.

In terms of assembly, homodimer.

It is found in the cytoplasm. In terms of biological role, transcription factor that regulates the expression of several genes involved in the transport and metabolism of L-arabinose. The protein is Arabinose operon regulatory protein of Salmonella typhimurium (strain LT2 / SGSC1412 / ATCC 700720).